A 170-amino-acid polypeptide reads, in one-letter code: Adenine phosphoribosyltransferase (170 aa).

It belongs to the purine/pyrimidine phosphoribosyltransferase family. As to quaternary structure, homodimer.

It localises to the cytoplasm. It catalyses the reaction AMP + diphosphate = 5-phospho-alpha-D-ribose 1-diphosphate + adenine. It participates in purine metabolism; AMP biosynthesis via salvage pathway; AMP from adenine: step 1/1. In terms of biological role, catalyzes a salvage reaction resulting in the formation of AMP, that is energically less costly than de novo synthesis. This chain is Adenine phosphoribosyltransferase, found in Nitrosopumilus maritimus (strain SCM1).